Reading from the N-terminus, the 385-residue chain is Probable thioesterase PNKD (385 aa).

Residues 32–58 (KASHNRTRALQSHSSPEGKEEPEPLSP) are disordered. Zn(2+)-binding residues include His-172, His-174, Asp-176, His-177, His-229, Asp-253, and His-291.

The protein belongs to the metallo-beta-lactamase superfamily. Glyoxalase II family. Isoform 2 interacts with the sarcomeric proteins, MRLC2, MYOM1 and ENO3. Zn(2+) serves as cofactor. Undergoes cleavage at the N-terminus. As to expression, isoform 1 is only expressed in the brain. Isoform 2 is ubiquitously detected with highest expression in skeletal muscle and detected in myocardial myofibrils.

Its subcellular location is the cell membrane. The protein localises to the mitochondrion. The protein resides in the cytoplasm. It localises to the golgi apparatus. It is found in the endoplasmic reticulum. The enzyme catalyses a thioester + H2O = a thiol + a carboxylate + H(+). Functionally, probable thioesterase that may play a role in cellular detoxification processes; it likely acts on a yet-unknown alpha-hydroxythioester substrate. In vitro, it is able to catalyze the hydrolysis of S-D-lactoyl-glutathione to form glutathione and D-lactic acid at very low rate, though this reaction is not physiologically relevant in vivo. The polypeptide is Probable thioesterase PNKD (PNKD) (Homo sapiens (Human)).